Here is a 354-residue protein sequence, read N- to C-terminus: UDP-N-acetylglucosamine--N-acetylmuramyl-(pentapeptide) pyrophosphoryl-undecaprenol N-acetylglucosamine transferase (354 aa).

UDP-N-acetyl-alpha-D-glucosamine-binding positions include 14-16 (TGG), asparagine 126, arginine 162, serine 190, isoleucine 243, 262-267 (ALTVSE), and glutamine 287.

The protein belongs to the glycosyltransferase 28 family. MurG subfamily.

The protein resides in the cell inner membrane. It catalyses the reaction di-trans,octa-cis-undecaprenyl diphospho-N-acetyl-alpha-D-muramoyl-L-alanyl-D-glutamyl-meso-2,6-diaminopimeloyl-D-alanyl-D-alanine + UDP-N-acetyl-alpha-D-glucosamine = di-trans,octa-cis-undecaprenyl diphospho-[N-acetyl-alpha-D-glucosaminyl-(1-&gt;4)]-N-acetyl-alpha-D-muramoyl-L-alanyl-D-glutamyl-meso-2,6-diaminopimeloyl-D-alanyl-D-alanine + UDP + H(+). It participates in cell wall biogenesis; peptidoglycan biosynthesis. In terms of biological role, cell wall formation. Catalyzes the transfer of a GlcNAc subunit on undecaprenyl-pyrophosphoryl-MurNAc-pentapeptide (lipid intermediate I) to form undecaprenyl-pyrophosphoryl-MurNAc-(pentapeptide)GlcNAc (lipid intermediate II). The protein is UDP-N-acetylglucosamine--N-acetylmuramyl-(pentapeptide) pyrophosphoryl-undecaprenol N-acetylglucosamine transferase of Photobacterium profundum (strain SS9).